We begin with the raw amino-acid sequence, 172 residues long: DNA-directed RNA polymerase II subunit rpb7 (172 aa).

Belongs to the eukaryotic RPB7/RPC8 RNA polymerase subunit family. As to quaternary structure, component of the RNA polymerase II (Pol II) complex consisting of 12 subunits. RPB4 and RPB7 form a subcomplex that protrudes from the 10-subunit Pol II core complex.

It is found in the nucleus. Its function is as follows. DNA-dependent RNA polymerase catalyzes the transcription of DNA into RNA using the four ribonucleoside triphosphates as substrates. Component of RNA polymerase II which synthesizes mRNA precursors and many functional non-coding RNAs. Pol II is the central component of the basal RNA polymerase II transcription machinery. It is composed of mobile elements that move relative to each other. RPB7 is part of a subcomplex with RPB4 that binds to a pocket formed by RPB1, RPB2 and RPB6 at the base of the clamp element. The RPB4-RPB7 subcomplex seems to lock the clamp via RPB7 in the closed conformation thus preventing double-stranded DNA to enter the active site cleft. The RPB4-RPB7 subcomplex binds single-stranded DNA and RNA. This is DNA-directed RNA polymerase II subunit rpb7 (polr2g) from Dictyostelium discoideum (Social amoeba).